Reading from the N-terminus, the 430-residue chain is Glutamate-1-semialdehyde 2,1-aminomutase (430 aa).

Lys265 is modified (N6-(pyridoxal phosphate)lysine).

This sequence belongs to the class-III pyridoxal-phosphate-dependent aminotransferase family. HemL subfamily. As to quaternary structure, homodimer. Requires pyridoxal 5'-phosphate as cofactor.

It localises to the cytoplasm. The enzyme catalyses (S)-4-amino-5-oxopentanoate = 5-aminolevulinate. Its pathway is porphyrin-containing compound metabolism; protoporphyrin-IX biosynthesis; 5-aminolevulinate from L-glutamyl-tRNA(Glu): step 2/2. The protein is Glutamate-1-semialdehyde 2,1-aminomutase of Helicobacter pylori (strain HPAG1).